The chain runs to 360 residues: Tryptophan--tRNA ligase, mitochondrial (360 aa).

Residues 1–18 (MALFSVRKARECWRFIRA) constitute a mitochondrion transit peptide. Residues Gln42 and 48-51 (HLGN) each bind ATP. Asp167 contributes to the L-tryptophan binding site. ATP contacts are provided by residues 179 to 181 (GED), Val217, and 226 to 230 (KMSKS).

The protein belongs to the class-I aminoacyl-tRNA synthetase family.

Its subcellular location is the mitochondrion matrix. It localises to the mitochondrion. It carries out the reaction tRNA(Trp) + L-tryptophan + ATP = L-tryptophyl-tRNA(Trp) + AMP + diphosphate + H(+). Its function is as follows. Catalyzes the attachment of tryptophan to tRNA(Trp) in a two-step reaction: tryptophan is first activated by ATP to form Trp-AMP and then transferred to the acceptor end of tRNA(Trp). The polypeptide is Tryptophan--tRNA ligase, mitochondrial (Wars2) (Mus musculus (Mouse)).